A 92-amino-acid polypeptide reads, in one-letter code: Protein S100-B (92 aa).

Blocked amino end (Ser); alternate is present on Ser2. The residue at position 2 (Ser2) is an N-acetylserine; alternate. 2 EF-hand domains span residues Asp13–Ile48 and Lys49–Ala84. His16 provides a ligand contact to Zn(2+). Positions 19, 22, and 24 each coordinate Ca(2+). His26 lines the Zn(2+) pocket. The Ca(2+) site is built by Lys27, Glu32, Asp62, Asp64, Asp66, Glu68, and Glu73. 2 residues coordinate Zn(2+): His86 and His91.

This sequence belongs to the S-100 family. In terms of assembly, dimer of either two alpha chains, or two beta chains, or one alpha and one beta chain. The S100B dimer binds two molecules of STK38. Interacts with CACYBP in a calcium-dependent manner. Interacts with ATAD3A; this interaction probably occurs in the cytosol prior to ATAD3A mitochondrial targeting. Interacts with S100A6. The S100B dimer interacts with two molecules of CAPZA1. Interacts with AGER. Interacts with PPP5C (via TPR repeats); the interaction is calcium-dependent and modulates PPP5C activity. Interacts with TPPP; this interaction inhibits TPPP dimerization. Interacts with isoform CLSTN3beta of CLSTN3; interaction promotes secretion. As to expression, although predominant among the water-soluble brain proteins, S100 is also found in a variety of other tissues.

It localises to the cytoplasm. The protein resides in the nucleus. Its subcellular location is the secreted. Small zinc- and- and calcium-binding protein that is highly expressed in astrocytes and constitutes one of the most abundant soluble proteins in brain. Weakly binds calcium but binds zinc very tightly-distinct binding sites with different affinities exist for both ions on each monomer. Physiological concentrations of potassium ion antagonize the binding of both divalent cations, especially affecting high-affinity calcium-binding sites. Acts as a neurotrophic factor that promotes astrocytosis and axonal proliferation. Involved in innervation of thermogenic adipose tissue by acting as an adipocyte-derived neurotrophic factor that promotes sympathetic innervation of adipose tissue. Binds to and initiates the activation of STK38 by releasing autoinhibitory intramolecular interactions within the kinase. Interaction with AGER after myocardial infarction may play a role in myocyte apoptosis by activating ERK1/2 and p53/TP53 signaling. Could assist ATAD3A cytoplasmic processing, preventing aggregation and favoring mitochondrial localization. May mediate calcium-dependent regulation on many physiological processes by interacting with other proteins, such as TPR-containing proteins, and modulating their activity. The polypeptide is Protein S100-B (Homo sapiens (Human)).